Reading from the N-terminus, the 315-residue chain is MKLDLFKWEKPAWIVSSLLVLISIFAMAISWAQFQAPFRPGLDFVGGTRLQLQLECASSNNCPAAIDVAEVQDILGGVGLGNSSVQVIEDYTLSIRQQTLDVEQREAVQKALNEGIGKFDPETIQIDTVGPTVGKALFRSGVLALVISLLGIIIYLTIRFQLDYAVFAIIALLYDALITMGAFAIFGLVGGVEVDSLFLVALLTIIGFSVNDTVVIYDRVRETLERHSDWDINHVVDDAVNQTLTRSINTSLTTSLPLVAIFLFGGDSLKFFALALIIGFASGVYSSIFMATTLWAWWRKWRSPKNPPREMVAEV.

6 helical membrane passes run 12–32 (AWIVSSLLVLISIFAMAISWA), 136–156 (ALFRSGVLALVISLLGIIIYL), 166–186 (VFAIIALLYDALITMGAFAIF), 188–208 (LVGGVEVDSLFLVALLTIIGF), 247–267 (SINTSLTTSLPLVAIFLFGGD), and 271–291 (FFALALIIGFASGVYSSIFMA).

It belongs to the SecD/SecF family. SecF subfamily. In terms of assembly, forms a complex with SecD. Part of the essential Sec protein translocation apparatus which comprises SecA, SecYEG and auxiliary proteins SecDF. Other proteins may also be involved.

It is found in the cell inner membrane. Its function is as follows. Part of the Sec protein translocase complex. Interacts with the SecYEG preprotein conducting channel. SecDF uses the proton motive force (PMF) to complete protein translocation after the ATP-dependent function of SecA. In terms of biological role, probably participates in protein translocation into and across both the cytoplasmic and thylakoid membranes in cyanobacterial cells. The protein is Protein translocase subunit SecF of Synechocystis sp. (strain ATCC 27184 / PCC 6803 / Kazusa).